The following is a 332-amino-acid chain: L-lactate dehydrogenase A chain (332 aa).

NAD(+) is bound by residues 29-57 and Arg-99; that span reads GAVGMACAISILMKDLADELALVDVVEDK. Substrate contacts are provided by Arg-106, Asn-138, and Arg-169. Asn-138 serves as a coordination point for NAD(+). The Proton acceptor role is filled by His-193. Substrate is bound at residue Thr-248.

The protein belongs to the LDH/MDH superfamily. LDH family. As to quaternary structure, homotetramer.

It localises to the cytoplasm. It carries out the reaction (S)-lactate + NAD(+) = pyruvate + NADH + H(+). It participates in fermentation; pyruvate fermentation to lactate; (S)-lactate from pyruvate: step 1/1. In terms of biological role, interconverts simultaneously and stereospecifically pyruvate and lactate with concomitant interconversion of NADH and NAD(+). The chain is L-lactate dehydrogenase A chain (LDHA) from Caiman crocodilus apaporiensis (Rio Apaporis caiman).